The following is a 278-amino-acid chain: Nucleotide-binding protein LHK_02029 (278 aa).

8 to 15 (GLAGSGKS) contributes to the ATP binding site. GTP is bound at residue 57–60 (DTRD).

It belongs to the RapZ-like family.

In terms of biological role, displays ATPase and GTPase activities. In Laribacter hongkongensis (strain HLHK9), this protein is Nucleotide-binding protein LHK_02029.